Consider the following 449-residue polypeptide: UDP-N-acetylmuramoylalanine--D-glutamate ligase (449 aa).

118–124 (GTNGKTT) lines the ATP pocket.

The protein belongs to the MurCDEF family.

Its subcellular location is the cytoplasm. It catalyses the reaction UDP-N-acetyl-alpha-D-muramoyl-L-alanine + D-glutamate + ATP = UDP-N-acetyl-alpha-D-muramoyl-L-alanyl-D-glutamate + ADP + phosphate + H(+). It participates in cell wall biogenesis; peptidoglycan biosynthesis. Cell wall formation. Catalyzes the addition of glutamate to the nucleotide precursor UDP-N-acetylmuramoyl-L-alanine (UMA). The protein is UDP-N-acetylmuramoylalanine--D-glutamate ligase of Staphylococcus aureus (strain Mu3 / ATCC 700698).